The chain runs to 207 residues: Large ribosomal subunit protein uL4 (207 aa).

A disordered region spans residues 44–78 (MRQGTHKTKNRAEVSGGGRKPWRQKGTGRARQGSI).

Belongs to the universal ribosomal protein uL4 family. Part of the 50S ribosomal subunit.

Its function is as follows. One of the primary rRNA binding proteins, this protein initially binds near the 5'-end of the 23S rRNA. It is important during the early stages of 50S assembly. It makes multiple contacts with different domains of the 23S rRNA in the assembled 50S subunit and ribosome. In terms of biological role, forms part of the polypeptide exit tunnel. This is Large ribosomal subunit protein uL4 from Geobacillus kaustophilus (strain HTA426).